A 331-amino-acid chain; its full sequence is Ribosomal RNA small subunit methyltransferase H (331 aa).

S-adenosyl-L-methionine is bound by residues 38–40, aspartate 56, phenylalanine 83, aspartate 100, and glutamine 107; that span reads GGY. The interval 287–331 is disordered; sequence DEAELAENPRARSARLRVGVRTDAPAGKVDPQALGTPLIPKKGRR.

It belongs to the methyltransferase superfamily. RsmH family.

It is found in the cytoplasm. The catalysed reaction is cytidine(1402) in 16S rRNA + S-adenosyl-L-methionine = N(4)-methylcytidine(1402) in 16S rRNA + S-adenosyl-L-homocysteine + H(+). Its function is as follows. Specifically methylates the N4 position of cytidine in position 1402 (C1402) of 16S rRNA. This chain is Ribosomal RNA small subunit methyltransferase H, found in Cereibacter sphaeroides (strain ATCC 17023 / DSM 158 / JCM 6121 / CCUG 31486 / LMG 2827 / NBRC 12203 / NCIMB 8253 / ATH 2.4.1.) (Rhodobacter sphaeroides).